Reading from the N-terminus, the 496-residue chain is Protein nucleotidyltransferase YdiU (496 aa).

8 residues coordinate ATP: glycine 98, glycine 100, arginine 101, lysine 116, aspartate 128, glycine 129, arginine 179, and arginine 186. The active-site Proton acceptor is the aspartate 259. Mg(2+)-binding residues include asparagine 260 and aspartate 269. Aspartate 269 lines the ATP pocket.

This sequence belongs to the SELO family. Mg(2+) is required as a cofactor. It depends on Mn(2+) as a cofactor.

It carries out the reaction L-seryl-[protein] + ATP = 3-O-(5'-adenylyl)-L-seryl-[protein] + diphosphate. The enzyme catalyses L-threonyl-[protein] + ATP = 3-O-(5'-adenylyl)-L-threonyl-[protein] + diphosphate. It catalyses the reaction L-tyrosyl-[protein] + ATP = O-(5'-adenylyl)-L-tyrosyl-[protein] + diphosphate. The catalysed reaction is L-histidyl-[protein] + UTP = N(tele)-(5'-uridylyl)-L-histidyl-[protein] + diphosphate. It carries out the reaction L-seryl-[protein] + UTP = O-(5'-uridylyl)-L-seryl-[protein] + diphosphate. The enzyme catalyses L-tyrosyl-[protein] + UTP = O-(5'-uridylyl)-L-tyrosyl-[protein] + diphosphate. Its function is as follows. Nucleotidyltransferase involved in the post-translational modification of proteins. It can catalyze the addition of adenosine monophosphate (AMP) or uridine monophosphate (UMP) to a protein, resulting in modifications known as AMPylation and UMPylation. The chain is Protein nucleotidyltransferase YdiU from Albidiferax ferrireducens (strain ATCC BAA-621 / DSM 15236 / T118) (Rhodoferax ferrireducens).